The chain runs to 469 residues: MDIEDVMNKLSLKNKKVLNRSSEYSRLIKVKRPMGLGPLEMCKPGACIFVACKELSIELNKSQLVRVLGTNDKLFEQSILALYTILGKKRPPYSIVEISNTFKLNSTICESSENLLKLYRTKILGGIEEVQSQFTNIDDGIFSAASVYIMTQQHSINIDHTLLLSLVDCSQETFQRAMNAITQCCYQGESIVKLKKTPPKNKQNTILRSPTSILISSSSTLNNTTTSTTTTAPKSPIPIPSLTPISQIKNLTTKPIVSPSSSPLLSSISPPKVLATPTLSSSSSSSSSSSSSLSPPLSSNPTTDLSSTNEPIVFNISSELLPIPPTTTFKNDGNENKNNTKNCNIEIIEEISNVDESPFNDNSVKKIEQSNPNISNKKRSRDELEKESELGKSQPPQPQQQPQQQQQQQKEKSVKNKINEGDLTLEQERLLIKKKKEQQFNDWKNSDFAKSKPTPVNATKQLTLDSFFK.

Low complexity-rich tracts occupy residues Ser218–Lys234 and Ala275–Thr308. Disordered stretches follow at residues Ser218–Ser241, Ala275–Asn309, Glu356–Leu423, and Lys436–Lys469. 2 stretches are compositionally biased toward basic and acidic residues: residues Ser380–Leu390 and Gln409–Leu423. Residues Thr454 to Lys469 are compositionally biased toward polar residues.

Belongs to the ORC6 family. As to quaternary structure, ORC is composed of six subunits.

Its subcellular location is the nucleus. Component of the origin recognition complex (ORC) that binds origins of replication. DNA-binding is ATP-dependent, however specific DNA sequences that define origins of replication have not been identified so far. ORC is required to assemble the pre-replication complex necessary to initiate DNA replication. This Dictyostelium discoideum (Social amoeba) protein is Origin recognition complex subunit 6 (orcF).